We begin with the raw amino-acid sequence, 126 residues long: S-adenosylmethionine decarboxylase proenzyme (126 aa).

The active-site Schiff-base intermediate with substrate; via pyruvic acid is the S63. S63 carries the post-translational modification Pyruvic acid (Ser); by autocatalysis. H68 acts as the Proton acceptor; for processing activity in catalysis. C83 acts as the Proton donor; for catalytic activity in catalysis.

Belongs to the prokaryotic AdoMetDC family. Type 1 subfamily. As to quaternary structure, heterotetramer of two alpha and two beta chains arranged as a dimer of alpha/beta heterodimers. The cofactor is pyruvate. Post-translationally, is synthesized initially as an inactive proenzyme. Formation of the active enzyme involves a self-maturation process in which the active site pyruvoyl group is generated from an internal serine residue via an autocatalytic post-translational modification. Two non-identical subunits are generated from the proenzyme in this reaction, and the pyruvate is formed at the N-terminus of the alpha chain, which is derived from the carboxyl end of the proenzyme. The post-translation cleavage follows an unusual pathway, termed non-hydrolytic serinolysis, in which the side chain hydroxyl group of the serine supplies its oxygen atom to form the C-terminus of the beta chain, while the remainder of the serine residue undergoes an oxidative deamination to produce ammonia and the pyruvoyl group blocking the N-terminus of the alpha chain.

It carries out the reaction S-adenosyl-L-methionine + H(+) = S-adenosyl 3-(methylsulfanyl)propylamine + CO2. It participates in amine and polyamine biosynthesis; S-adenosylmethioninamine biosynthesis; S-adenosylmethioninamine from S-adenosyl-L-methionine: step 1/1. Functionally, catalyzes the decarboxylation of S-adenosylmethionine to S-adenosylmethioninamine (dcAdoMet), the propylamine donor required for the synthesis of the polyamines spermine and spermidine from the diamine putrescine. In Clostridium kluyveri (strain NBRC 12016), this protein is S-adenosylmethionine decarboxylase proenzyme.